Here is a 244-residue protein sequence, read N- to C-terminus: Haloacid dehalogenase-like hydrolase domain-containing protein Sgpp (244 aa).

Asp28 acts as the Nucleophile in catalysis. Residues Asp28, Asp30, and Asp189 each coordinate Mg(2+). Residue Asp30 is the Proton donor of the active site.

Belongs to the HAD-like hydrolase superfamily. DOG/GPP family. Mg(2+) serves as cofactor. In terms of tissue distribution, ubiquitous with highest expression in flowers.

In terms of biological role, acts as a phosphosugar phosphatase on a broad range of sugar phosphate substrates with preferential activity on D-ribose-5-phosphate, 2-deoxy-D-ribose-5-phosphate, 2-deoxy-D-glucose-6-phosphate, and D-mannose-6-phosphate and with a lower activity on D-fructose-1-phosphate, D-glucose-6-phosphate, DL-glycerol-3-phosphate, and D-fructose-6-phosphate. The chain is Haloacid dehalogenase-like hydrolase domain-containing protein Sgpp (SGPP) from Arabidopsis thaliana (Mouse-ear cress).